The following is a 287-amino-acid chain: Phosphatidylserine decarboxylase proenzyme (287 aa).

Residues D90, H147, and S253 each act as charge relay system; for autoendoproteolytic cleavage activity in the active site. The active-site Schiff-base intermediate with substrate; via pyruvic acid; for decarboxylase activity is the S253. Residue S253 is modified to Pyruvic acid (Ser); by autocatalysis.

The protein belongs to the phosphatidylserine decarboxylase family. PSD-B subfamily. Prokaryotic type I sub-subfamily. Heterodimer of a large membrane-associated beta subunit and a small pyruvoyl-containing alpha subunit. Pyruvate serves as cofactor. Is synthesized initially as an inactive proenzyme. Formation of the active enzyme involves a self-maturation process in which the active site pyruvoyl group is generated from an internal serine residue via an autocatalytic post-translational modification. Two non-identical subunits are generated from the proenzyme in this reaction, and the pyruvate is formed at the N-terminus of the alpha chain, which is derived from the carboxyl end of the proenzyme. The autoendoproteolytic cleavage occurs by a canonical serine protease mechanism, in which the side chain hydroxyl group of the serine supplies its oxygen atom to form the C-terminus of the beta chain, while the remainder of the serine residue undergoes an oxidative deamination to produce ammonia and the pyruvoyl prosthetic group on the alpha chain. During this reaction, the Ser that is part of the protease active site of the proenzyme becomes the pyruvoyl prosthetic group, which constitutes an essential element of the active site of the mature decarboxylase.

The protein localises to the cell membrane. It catalyses the reaction a 1,2-diacyl-sn-glycero-3-phospho-L-serine + H(+) = a 1,2-diacyl-sn-glycero-3-phosphoethanolamine + CO2. It participates in phospholipid metabolism; phosphatidylethanolamine biosynthesis; phosphatidylethanolamine from CDP-diacylglycerol: step 2/2. In terms of biological role, catalyzes the formation of phosphatidylethanolamine (PtdEtn) from phosphatidylserine (PtdSer). The sequence is that of Phosphatidylserine decarboxylase proenzyme from Aliivibrio fischeri (strain ATCC 700601 / ES114) (Vibrio fischeri).